The primary structure comprises 192 residues: Cytidylate kinase (192 aa).

7 to 15 (GPAGSGKST) lines the ATP pocket.

The protein belongs to the cytidylate kinase family. Type 2 subfamily.

The protein resides in the cytoplasm. The catalysed reaction is CMP + ATP = CDP + ADP. The enzyme catalyses dCMP + ATP = dCDP + ADP. The sequence is that of Cytidylate kinase from Haloarcula marismortui (strain ATCC 43049 / DSM 3752 / JCM 8966 / VKM B-1809) (Halobacterium marismortui).